The chain runs to 130 residues: MAATVKKTGSKKSKRNVPNGVVHIQSTFNNTIVSITDTSGHVISWSSAGASGFKGARKGTPFAAQTAAEAAARRALDQGMRQIEVLVRGPGSGRETAIRALQVAGLEITLIRDVTPLPHNGCRRPKRRRV.

This sequence belongs to the universal ribosomal protein uS11 family. Part of the 30S ribosomal subunit. Interacts with proteins S7 and S18. Binds to IF-3.

Located on the platform of the 30S subunit, it bridges several disparate RNA helices of the 16S rRNA. Forms part of the Shine-Dalgarno cleft in the 70S ribosome. The polypeptide is Small ribosomal subunit protein uS11 (Prochlorococcus marinus (strain MIT 9312)).